Reading from the N-terminus, the 25-residue chain is Caerin-1.4 (25 aa).

L25 bears the Leucine amide mark.

Belongs to the frog skin active peptide (FSAP) family. Caerin subfamily. As to expression, expressed by the skin parotoid and/or rostral glands.

It is found in the secreted. Functionally, antibacterial peptide, that adopts an alpha helical conformation which can disrupt bacterial membranes. Each caerin displays a different antimicrobial specificity. The protein is Caerin-1.4 of Ranoidea caerulea (Green tree frog).